We begin with the raw amino-acid sequence, 210 residues long: Thymidylate kinase (210 aa).

10 to 17 (GLEGAGKS) provides a ligand contact to ATP.

The protein belongs to the thymidylate kinase family.

The catalysed reaction is dTMP + ATP = dTDP + ADP. Its function is as follows. Phosphorylation of dTMP to form dTDP in both de novo and salvage pathways of dTTP synthesis. The polypeptide is Thymidylate kinase (tmk) (Haemophilus influenzae (strain ATCC 51907 / DSM 11121 / KW20 / Rd)).